A 57-amino-acid chain; its full sequence is Small ribosomal subunit protein bS21 (57 aa).

The interval 31 to 57 (EVRKRKHYEKPSVRRKKKSEAARKRKF) is disordered. Residues 33 to 57 (RKRKHYEKPSVRRKKKSEAARKRKF) are compositionally biased toward basic residues.

Belongs to the bacterial ribosomal protein bS21 family.

The sequence is that of Small ribosomal subunit protein bS21 (rpsU) from Halalkalibacterium halodurans (strain ATCC BAA-125 / DSM 18197 / FERM 7344 / JCM 9153 / C-125) (Bacillus halodurans).